A 671-amino-acid chain; its full sequence is APC membrane recruitment protein 2 (671 aa).

4 disordered regions span residues 1-24, 76-358, 391-414, and 444-598; these read METSRSRGGGGAVSERGGAGASVG, SGGT…SDPS, EAGPSCDKHVPGPGKPALSKKNPG, and SQTE…PLRT. Gly residues-rich tracts occupy residues 7–21 and 126–137; these read RGGGGAVSERGGAGA and GGDSGGGGGGRP. Ser-162 carries the phosphoserine modification. The segment covering 171–182 has biased composition (basic and acidic residues); that stretch reads GRSENGKGEPVD. Residues Ser-229 and Ser-233 each carry the phosphoserine modification. Composition is skewed to basic and acidic residues over residues 236–260, 276–286, and 295–307; these read CVKEETPRAAREPEEPSQDAPRDPA, APARSCREAEG, and ARGEDAAGHRRAE. Residues 342–353 are compositionally biased toward low complexity; it reads APAAPDPASVDP. Ser-355 and Ser-358 each carry phosphoserine. Residues 447 to 458 show a composition bias toward low complexity; that stretch reads EEQGPEPQEGAA. Basic and acidic residues-rich tracts occupy residues 472 to 487 and 498 to 514; these read TPKDTRCVEAAKDASS and IEPHPKEEPKHPEKEQQ.

This sequence belongs to the Amer family. Interacts with APC.

It localises to the cell membrane. Negative regulator of the canonical Wnt signaling pathway involved in neuroectodermal patterning. Acts by specifically binding phosphatidylinositol 4,5-bisphosphate (PtdIns(4,5)P2), translocating to the cell membrane and interacting with key regulators of the canonical Wnt signaling pathway, such as components of the beta-catenin destruction complex. The polypeptide is APC membrane recruitment protein 2 (AMER2) (Homo sapiens (Human)).